The primary structure comprises 347 residues: MRALGAVVALLLCGQLFAAETGNEATDATDDSCPKPPEIPKGYVEHMVRYHCQTYYKLRTAGDGVYTLDSNKQWTNKVTGEKLPECEAVCGKPKNPVDQVQRIMGGSLDAKGSFPWQAKMISHHNLTSGATLINEQWLLTTAKNLRLGHKNDTKAKDIAPTLRLYVGKKQEVEIEKVIFHPDNSTVDIGLIKLKQKVPVNERVMPICLPSKDYVNVGLVGYVSGWGRNANLNFTEHLKYVMLPVADQEKCVQYYEGSTVPEKKTPKSPVGVQPILNEHTFCAGLSKYQEDTCYGDAGSAFAVHDKDDDTWYAAGILSFDKSCRTAEYGVYVRVTSILDWIQTTIADN.

Positions 1-18 (MRALGAVVALLLCGQLFA) are cleaved as a signal peptide. The region spanning 31–88 (DSCPKPPEIPKGYVEHMVRYHCQTYYKLRTAGDGVYTLDSNKQWTNKVTGEKLPECEA) is the Sushi domain. 2 cysteine pairs are disulfide-bonded: Cys52–Cys86 and Cys90–Cys207. A Peptidase S1 domain is found at 103–345 (IMGGSLDAKG…ILDWIQTTIA (243 aa)). 4 N-linked (GlcNAc...) asparagine glycosylation sites follow: Asn125, Asn151, Asn183, and Asn232. Intrachain disulfides connect Cys250–Cys281 and Cys292–Cys322. Residues 259 to 264 (VPEKKT) form an interaction with CD163 region.

Belongs to the peptidase S1 family. Tetramer of two alpha and two beta chains; disulfide-linked. The hemoglobin/haptoglobin complex is composed of a haptoglobin dimer bound to two hemoglobin alpha-beta dimers. Interacts with CD163. Interacts with ERGIC3. As to expression, expressed by the liver and secreted in plasma.

The protein resides in the secreted. As a result of hemolysis, hemoglobin is found to accumulate in the kidney and is secreted in the urine. Haptoglobin captures, and combines with free plasma hemoglobin to allow hepatic recycling of heme iron and to prevent kidney damage. Haptoglobin also acts as an antioxidant, has antibacterial activity and plays a role in modulating many aspects of the acute phase response. Hemoglobin/haptoglobin complexes are rapidly cleared by the macrophage CD163 scavenger receptor expressed on the surface of liver Kupfer cells through an endocytic lysosomal degradation pathway. This is Haptoglobin (HP) from Sus scrofa (Pig).